The primary structure comprises 140 residues: Lysozyme B (140 aa).

The first 18 residues, M1–G18, serve as a signal peptide directing secretion. Positions R19 to F140 constitute a C-type lysozyme domain. Cystine bridges form between C24–C139, C45–C129, C80–C96, and C92–C110. Active-site residues include E50 and D68.

It belongs to the glycosyl hydrolase 22 family. Found in the midgut.

It catalyses the reaction Hydrolysis of (1-&gt;4)-beta-linkages between N-acetylmuramic acid and N-acetyl-D-glucosamine residues in a peptidoglycan and between N-acetyl-D-glucosamine residues in chitodextrins.. Its function is as follows. Unlikely to play an active role in the humoral immune defense. May have a function in the digestion of bacteria in the food. In Drosophila melanogaster (Fruit fly), this protein is Lysozyme B (LysB).